We begin with the raw amino-acid sequence, 300 residues long: Ribosomal protein L11 methyltransferase (300 aa).

Threonine 152, glycine 173, aspartate 195, and asparagine 234 together coordinate S-adenosyl-L-methionine.

It belongs to the methyltransferase superfamily. PrmA family.

Its subcellular location is the cytoplasm. It catalyses the reaction L-lysyl-[protein] + 3 S-adenosyl-L-methionine = N(6),N(6),N(6)-trimethyl-L-lysyl-[protein] + 3 S-adenosyl-L-homocysteine + 3 H(+). In terms of biological role, methylates ribosomal protein L11. This chain is Ribosomal protein L11 methyltransferase, found in Burkholderia multivorans (strain ATCC 17616 / 249).